A 307-amino-acid polypeptide reads, in one-letter code: Coproporphyrin III ferrochelatase (307 aa).

Fe-coproporphyrin III contacts are provided by residues tyrosine 12, arginine 29, 45–46 (RY), serine 53, and tyrosine 124. Positions 181 and 263 each coordinate Fe(2+).

Belongs to the ferrochelatase family.

The protein localises to the cytoplasm. The enzyme catalyses Fe-coproporphyrin III + 2 H(+) = coproporphyrin III + Fe(2+). Its pathway is porphyrin-containing compound metabolism; protoheme biosynthesis. Involved in coproporphyrin-dependent heme b biosynthesis. Catalyzes the insertion of ferrous iron into coproporphyrin III to form Fe-coproporphyrin III. This Staphylococcus epidermidis (strain ATCC 12228 / FDA PCI 1200) protein is Coproporphyrin III ferrochelatase.